The primary structure comprises 230 residues: MTQKHGKNYVAAVAKVEAEKAYALNDAVSLVKEIDFAKFDASVEVVFKLNVDTRQADQQLRGAVVLPNGTGKDKTVVVFAQGDKAKEAEAAGADVVGAADLVQRIQGGWLDFDVAVATPDMMAQVGRVGRALGPKGLMPNPKTGTVTMDVTKAVSDAKGGQVTYRTDRDGNVAVPVGRVSFEEGKLAENIKSIAETVLKARPAAVKGTYVQHVSISSTFGPAVTLDINTL.

This sequence belongs to the universal ribosomal protein uL1 family. Part of the 50S ribosomal subunit.

Its function is as follows. Binds directly to 23S rRNA. The L1 stalk is quite mobile in the ribosome, and is involved in E site tRNA release. Functionally, protein L1 is also a translational repressor protein, it controls the translation of the L11 operon by binding to its mRNA. The protein is Large ribosomal subunit protein uL1 of Leuconostoc mesenteroides subsp. mesenteroides (strain ATCC 8293 / DSM 20343 / BCRC 11652 / CCM 1803 / JCM 6124 / NCDO 523 / NBRC 100496 / NCIMB 8023 / NCTC 12954 / NRRL B-1118 / 37Y).